Here is a 453-residue protein sequence, read N- to C-terminus: Aldehyde dehydrogenase, dimeric NADP-preferring (453 aa).

Ser2 is modified (N-acetylserine). Lys178 is subject to N6-acetyllysine. 188–193 provides a ligand contact to NAD(+); it reads GSTAVG. Lys194 is modified (N6-acetyllysine). Active-site residues include Glu210 and Cys244.

It belongs to the aldehyde dehydrogenase family. As to quaternary structure, homodimer. As to expression, constitutively expressed in cornea, stomach, skin, bladder and lungs. Lowest expression levels in lungs and bladder.

It localises to the cytoplasm. It catalyses the reaction an aldehyde + NAD(+) + H2O = a carboxylate + NADH + 2 H(+). The enzyme catalyses octanal + NAD(+) + H2O = octanoate + NADH + 2 H(+). Its function is as follows. ALDHs play a major role in the detoxification of alcohol-derived acetaldehyde. They are involved in the metabolism of corticosteroids, biogenic amines, neurotransmitters, and lipid peroxidation. Oxidizes medium and long chain aldehydes into non-toxic fatty acids. Preferentially oxidizes aromatic aldehyde substrates. Comprises about 50 percent of corneal epithelial soluble proteins. May play a role in preventing corneal damage caused by ultraviolet light. This is Aldehyde dehydrogenase, dimeric NADP-preferring (Aldh3a1) from Mus musculus (Mouse).